A 3033-amino-acid chain; its full sequence is Genome polyprotein (3033 aa).

Serine 2 carries the post-translational modification N-acetylserine; by host. Residues 2 to 23 form an interaction with STAT1 region; sequence STNPKPQRKTKRNTNRRPQDVK. The segment at 2–58 is interaction with EIF2AK2/PKR; the sequence is STNPKPQRKTKRNTNRRPQDVKFPGGGQIVGGVYLLPRRGPRLGVRATRKTSERSQP. The interval 2–59 is interaction with DDX3X; sequence STNPKPQRKTKRNTNRRPQDVKFPGGGQIVGGVYLLPRRGPRLGVRATRKTSERSQPR. Positions 2–75 are disordered; it reads STNPKPQRKT…PKDRRSAGKS (74 aa). At 2-168 the chain is on the cytoplasmic side; the sequence is STNPKPQRKT…EDGINYATGN (167 aa). 2 consecutive short sequence motifs (nuclear localization signal) follow at residues 5 to 13 and 38 to 43; these read PKPQRKTKR and PRRGPR. Residues 7–16 are compositionally biased toward basic residues; the sequence is PQRKTKRNTN. The span at 32-47 shows a compositional bias: low complexity; the sequence is GGVYLLPRRGPRLGVR. A Phosphoserine; by host modification is found at serine 53. 2 short sequence motifs (nuclear localization signal) span residues 58-64 and 66-71; these read PRGRRQP and PKDRRS. A phosphoserine; by host mark is found at serine 99 and serine 116. An important for endoplasmic reticulum and mitochondrial localization region spans residues 112–152; the sequence is PRHRSRNLGKVIDTLTCGFADLMGYIPVVGAPVGGVARALA. The segment at 122-173 is interaction with APOA2; that stretch reads VIDTLTCGFADLMGYIPVVGAPVGGVARALAHGVRVLEDGINYATGNLPGCS. The tract at residues 164–167 is important for lipid droplets localization; sequence YATG. A helical transmembrane segment spans residues 169 to 189; sequence LPGCSFSIFLLALLSCMSVPV. A propeptide spans 178–191 (ER anchor for the core protein, removed in mature form by host signal peptidase); it reads LLALLSCMSVPVSA. Over 190-358 the chain is Lumenal; sequence SAVEVKNTSQ…TGAHWGVMFG (169 aa). N-linked (GlcNAc...) asparagine; by host glycans are attached at residues asparagine 196, asparagine 209, and asparagine 234. Residues 265–296 are important for fusion; sequence IVVSATFCSALYIGDVCGAIMIAAQATIISPQ. Asparagine 305 carries an N-linked (GlcNAc...) asparagine; by host glycan. The helical transmembrane segment at 359–379 threads the bilayer; the sequence is LAYFSMQGAWAKVVVILLLTA. Over 380 to 729 the chain is Lumenal; that stretch reads GVDAQTHTIS…WEWVVLLFLL (350 aa). Residues 385 to 412 form an HVR1 region; it reads THTISGHAARTTHGLVSLFTPGSQQNIQ. N-linked (GlcNAc...) (high mannose) asparagine; by host glycans are attached at residues asparagine 417, asparagine 423, and asparagine 430. 4 disulfides stabilise this stretch: cysteine 429-cysteine 554, cysteine 452-cysteine 459, cysteine 488-cysteine 496, and cysteine 505-cysteine 510. Asparagine 448 carries an N-linked (GlcNAc...) asparagine; by host glycan. Residues 475–480 are HVR2; sequence EENVTN. Asparagine 477 is a glycosylation site (N-linked (GlcNAc...) asparagine; by host). The CD81-binding 1 stretch occupies residues 482-495; it reads DNMRPYCWHYPPRP. Asparagine 534 is a glycosylation site (N-linked (GlcNAc...) asparagine; by host). A CD81-binding 2 region spans residues 546 to 553; it reads PPRGAWFG. An N-linked (GlcNAc...) asparagine; by host glycan is attached at asparagine 558. Cystine bridges form between cysteine 566–cysteine 571, cysteine 585–cysteine 589, cysteine 601–cysteine 624, and cysteine 611–cysteine 648. 2 N-linked (GlcNAc...) (high mannose) asparagine; by host glycosylation sites follow: asparagine 627 and asparagine 649. The cysteines at positions 656 and 681 are disulfide-linked. The PKR/eIF2-alpha phosphorylation homology domain (PePHD) stretch occupies residues 664–675; the sequence is SQLSPLLHSTTE. A helical transmembrane segment spans residues 730–750; sequence LADARVCACLWMLLLLGQAEA. Topologically, residues 751–761 are lumenal; the sequence is ALEKLVILHAA. The helical transmembrane segment at 762 to 782 threads the bilayer; it reads SAASSHGMLCFIIFFIAAWYI. Residues 783–786 are Cytoplasmic-facing; sequence KGRV. The chain crosses the membrane as a helical span at residues 787 to 807; it reads TPLVTYSYLGMWSFSLLLLAL. Over 808–817 the chain is Lumenal; that stretch reads PQQAYALDTT. A helical membrane pass occupies residues 818–838; sequence EQGQIGLVLLVVISVFTLSPA. Over 839 to 885 the chain is Cytoplasmic; the sequence is YKILLCRSLWWLSYLLVRAEALIQDWVPPWQARGGRDGIIWAATIFC. A helical transmembrane segment spans residues 886-906; the sequence is PGVLFDITNWLLAILGPGYLL. The region spanning 903–1030 is the Peptidase C18 domain; it reads GYLLRSVLTS…EYTSKGWKLL (128 aa). Residues 907–932 lie on the Lumenal side of the membrane; the sequence is RSVLTSTPYFVRAQALLRICAAVRHL. Residues 908–1210 form a protease NS2-3 region; the sequence is SVLTSTPYFV…PIESLDVIIR (303 aa). Cysteine 926 carries the S-palmitoyl cysteine; by host lipid modification. Residues 933–953 form a helical membrane-spanning segment; sequence SGGKYVQMMLLTLGKWTGTYI. The tract at residues 933–953 is interaction with host SCPS1; sequence SGGKYVQMMLLTLGKWTGTYI. Topologically, residues 954–1661 are cytoplasmic; it reads YDHLSPMSGW…CMQADLEIMT (708 aa). Residues histidine 956, glutamate 976, and cysteine 997 each act as for protease NS2 activity; shared with dimeric partner in the active site. A Peptidase S29 domain is found at 1031-1212; it reads APITAYAQQT…ESLDVIIRSP (182 aa). Catalysis depends on charge relay system; for serine protease NS3 activity residues histidine 1087 and aspartate 1111. Residues cysteine 1127 and cysteine 1129 each coordinate Zn(2+). Residue serine 1169 is the Charge relay system; for serine protease NS3 activity of the active site. Residues cysteine 1175 and histidine 1179 each contribute to the Zn(2+) site. In terms of domain architecture, Helicase ATP-binding spans 1221-1373; the sequence is PAVPQTYQVG…PNIEEVALGH (153 aa). Residue 1234–1241 coordinates ATP; the sequence is APTGSGKS. 2 residues coordinate Mg(2+): serine 1241 and glutamate 1321. Residues 1320–1323 carry the DECH box motif; the sequence is DECH. Residues 1490 to 1502 are RNA-binding; that stretch reads QRRGRTGRGRLGI. A helical membrane pass occupies residues 1662 to 1682; it reads STWVLAGGVLAAIAAYCLATG. The segment at 1683 to 1694 is NS3-binding; sequence CVVCIGRVNINQ. Topologically, residues 1683-1809 are cytoplasmic; it reads CVVCIGRVNI…ALTSPLPTST (127 aa). The chain crosses the membrane as a helical span at residues 1810-1830; the sequence is TILLNIMGGWLASQIAPAAGA. Residues 1831–1832 lie on the Lumenal side of the membrane; it reads TG. Residues 1833–1853 form a helical membrane-spanning segment; it reads FVVSGLVGAAVGSIGLGKILV. Residue aspartate 1854 is a topological domain, cytoplasmic. The chain crosses the membrane as a helical span at residues 1855 to 1875; it reads VLAGYGAGISGALVAFKIMSG. Residues 1876-1885 lie on the Lumenal side of the membrane; the sequence is EKPSVEDVVN. The helical transmembrane segment at 1886-1906 threads the bilayer; the sequence is LLPGILSPGALVVGVICAAIL. Topologically, residues 1907–1976 are cytoplasmic; sequence RRHVGQGEGA…WITEDCPVPC (70 aa). The S-palmitoyl cysteine; by host moiety is linked to residue cysteine 1976. An intramembrane segment occupies 1977–2007; sequence AGSWLRDIWDWACTILTDFKNWLSTKLLPKM. The Cytoplasmic segment spans residues 2008 to 3012; it reads PGLPFISCQR…YHSVSRARPR (1005 aa). Cysteine 2015, cysteine 2033, cysteine 2035, and cysteine 2056 together coordinate Zn(2+). The tract at residues 2124 to 2212 is FKBP8-binding; sequence EFFSWVDGVQ…ASSSASQLSA (89 aa). A transcriptional activation region spans residues 2124 to 2332; that stretch reads EFFSWVDGVQ…PTPPPRRRRA (209 aa). Residues 2139–2143 form an interaction with non-structural protein 4A region; it reads PTPKP. The interval 2193-2212 is disordered; that stretch reads RLARGSPPSEASSSASQLSA. Positions 2193–2460 are interaction with host SKP2; that stretch reads RLARGSPPSE…ALITPCGPEE (268 aa). Phosphoserine; by host is present on residues serine 2198, serine 2201, serine 2205, serine 2208, serine 2211, and serine 2214. Positions 2198–2212 are enriched in low complexity; that stretch reads SPPSEASSSASQLSA. Residues 2214-2249 form an ISDR region; that stretch reads SLRATCTAHAKNYAVEMVDANFFMGSDVTRIESETK. Positions 2214 to 2275 are interaction with EIF2AK2/PKR; the sequence is SLRATCTAHA…REPSVPSEYL (62 aa). Residues 2249 to 2306 are NS4B-binding; the sequence is KVLILDSLDPSVEEEDEREPSVPSEYLLPKKKFPQALPVWARPDYNPPVVETWKRPDY. A V3 region spans residues 2299 to 2376; the sequence is ETWKRPDYDP…MDTTDATDQP (78 aa). Positions 2308-2328 are disordered; that stretch reads PPTVSGCALPPRVTAPTPPPR. The SH3-binding motif lies at 2322 to 2325; that stretch reads APTP. A Nuclear localization signal motif is present at residues 2327-2335; sequence PRRRRALVL. Residue lysine 2350 forms a Glycyl lysine isopeptide (Lys-Gly) (interchain with G-Cter in ubiquitin) linkage. The interval 2353-2431 is disordered; that stretch reads GQLPPSCDSG…PDLDSGSWST (79 aa). Residues 2361–2373 show a composition bias toward polar residues; sequence SGRSTGMDTTDAT. Phosphoserine; by host occurs at positions 2471 and 2484. Residues 2656–2774 enclose the RdRp catalytic domain; that stretch reads PMGFSYDTRC…ISESQGAEED (119 aa). Mg(2+) contacts are provided by aspartate 2662, aspartate 2760, and aspartate 2761. Residues 3013-3033 form a helical membrane-spanning segment; it reads FLLLCLLLLSVGVGIFLLPAR.

Belongs to the hepacivirus polyprotein family. As to quaternary structure, homooligomer. Interacts with E1 (via C-terminus). Interacts with the non-structural protein 5A. Interacts (via N-terminus) with host STAT1 (via SH2 domain); this interaction results in decreased STAT1 phosphorylation and ubiquitin-mediated proteasome-dependent STAT1 degradation, leading to decreased IFN-stimulated gene transcription. Interacts with host STAT3; this interaction constitutively activates STAT3. Interacts with host LTBR receptor. Interacts with host TNFRSF1A receptor and possibly induces apoptosis. Interacts with host HNRPK. Interacts with host YWHAE. Interacts with host UBE3A/E6AP. Interacts with host DDX3X. Interacts with host APOA2. Interacts with host RXRA protein. Interacts with host SP110 isoform 3/Sp110b; this interaction sequesters the transcriptional corepressor SP110 away from the nucleus. Interacts with host CREB3 nuclear transcription protein; this interaction triggers cell transformation. Interacts with host ACY3. Interacts with host C1QR1. Interacts with host RBM24; this interaction, which enhances the interaction of the mature core protein with 5'-UTR, may inhibit viral translation and favor replication. Interacts with host EIF2AK2/PKR; this interaction induces the autophosphorylation of EIF2AK2. Part of the viral assembly initiation complex composed of NS2, E1, E2, NS3, NS4A, NS5A and the mature core protein. In terms of assembly, forms a heterodimer with envelope glycoprotein E2. Interacts with mature core protein. Interacts with protease NS2. The heterodimer E1/E2 interacts with host CLDN1; this interaction plays a role in viral entry into host cell. Interacts with host SPSB2 (via C-terminus). Part of the viral assembly initiation complex composed of NS2, E1, E2, NS3, NS4A, NS5A and the mature core protein. Interacts with host NEURL3; this interaction prevents E1 binding to glycoprotein E2. Forms a heterodimer with envelope glycoprotein E1. Interacts with host CD81 and SCARB1 receptors; these interactions play a role in viral entry into host cell. Interacts with host EIF2AK2/PKR; this interaction inhibits EIF2AK2 and probably allows the virus to evade the innate immune response. Interacts with host CD209/DC-SIGN and CLEC4M/DC-SIGNR. Interact with host SPCS1; this interaction is essential for viral particle assembly. Interacts with protease NS2. The heterodimer E1/E2 interacts with host CLDN1; this interaction plays a role in viral entry into host cell. Part of the viral assembly initiation complex composed of NS2, E1, E2, NS3, NS4A, NS5A and the mature core protein. Interacts with host SLC3A2/4F2hc; the interaction may facilitate viral entry into host cell. Interacts with human PLSCR1. As to quaternary structure, homohexamer. Homoheptamer. Interacts with protease NS2. In terms of assembly, homodimer. Interacts with host SPCS1; this interaction is essential for viral particle assembly. Interacts with envelope glycoprotein E1. Interacts with envelope glycoprotein E2. Interacts with viroporin p7. Interacts with serine protease/helicase NS3. Part of the replication complex composed of NS2, NS3, NS4A, NS4B, NS5A and the RNA-directed RNA polymerase embedded in an ER-derived membranous web. Part of the viral assembly initiation complex composed of NS2, E1, E2, NS3, NS4A, NS5A and the mature core protein. Interacts with protease NS2. Interacts with non-structural protein 4A; this interaction stabilizes the folding of NS3 serine protease. NS3-NS4A interaction is essential for NS3 activation and allows membrane anchorage of the latter. NS3/NS4A complex also prevents phosphorylation of host IRF3, thus preventing the establishment of dsRNA induced antiviral state. Interacts with host MAVS; this interaction leads to the cleavage and inhibition of host MAVS. Interacts with host TICAM1; this interaction leads to the cleavage and inhibition of host TICAM1. Interacts with host TANK-binding kinase/TBK1; this interaction results in the inhibition of the association between TBK1 and IRF3, which leads to the inhibition of IRF3 activation. Interacts with host RBM24. Part of the replication complex composed of NS2, NS3, NS4A, NS4B, NS5A and the RNA-directed RNA polymerase embedded in an ER-derived membranous web. Part of the viral assembly initiation complex composed of NS2, E1, E2, NS3, NS4A, NS5A and the mature core protein. As to quaternary structure, interacts with NS3 serine protease; this interaction stabilizes the folding of NS3 serine protease. NS3-NS4A interaction is essential for NS3 activation and allows membrane anchorage of the latter. Interacts with non-structural protein 5A (via N-terminus). Part of the replication complex composed of NS2, NS3, NS4A, NS4B, NS5A and the RNA-directed RNA polymerase embedded in an ER-derived membranous web. Part of the viral assembly initiation complex composed of NS2, E1, E2, NS3, NS4A, NS5A and the mature core protein. In terms of assembly, homomultimer. Interacts with non-structural protein NS5A. Interacts with host PLA2G4C; this interaction likely initiates the recruitment of replication complexes to lipid droplets. Interacts with host STING; this interaction disrupts the interaction between STING and TBK1 thereby suppressing the interferon signaling. Part of the replication complex composed of NS2, NS3, NS4A, NS4B, NS5A and the RNA-directed RNA polymerase embedded in an ER-derived membranous web. Monomer. Homodimer; dimerization is required for RNA-binding. Interacts with the mature core protein. Interacts (via N-terminus) with non-structural protein 4A. Interacts with non-structural protein 4B. Interacts (via region D2) with RNA-directed RNA polymerase. Part of the viral assembly initiation complex composed of NS2, E1, E2, NS3, NS4A, NS5A and the mature core protein. Part of the replication complex composed of NS2, NS3, NS4A, NS4B, NS5A and the RNA-directed RNA polymerase embedded in an ER-derived membranous web. Interacts with host GRB2. Interacts with host BIN1. Interacts with host PIK3R1. Interacts with host SRCAP. Interacts with host FKBP8. Interacts (via C-terminus) with host VAPB (via MSP domain). Interacts with host EIF2AK2/PKR; this interaction leads to disruption of EIF2AK2 dimerization by NS5A and probably allows the virus to evade the innate immune response. Interacts (via N-terminus) with host PACSIN2 (via N-terminus); this interaction attenuates protein kinase C alpha-mediated phosphorylation of PACSIN2 by disrupting the interaction between PACSIN2 and PRKCA. Interacts (via N-terminus) with host SRC kinase (via SH2 domain). Interacts with most Src-family kinases. Interacts with host IFI27 and SKP2; promotes the ubiquitin-mediated proteasomal degradation of NS5A. Interacts with host GPS2. Interacts with host TNFRSF21; this interaction allows the modulation by the virus of JNK, p38 MAPK, STAT3, and Akt signaling pathways in a DR6-dependent manner. Interacts (via N-terminus) with host CIDEB (via N-terminus); this interaction seems to regulate the association of HCV particles with APOE. Interacts with host CHKA/Choline Kinase-alpha; CHKA bridges host PI4KA and NS5A and potentiates NS5A-stimulated PI4KA activity, which then facilitates the targeting of the ternary complex to the ER for viral replication. Interacts with host SPSB2 (via C-terminus); this interaction targets NS5A for ubiquitination and degradation. Interacts with host RAB18; this interaction may promote the association of NS5A and other replicase components with lipid droplets. Interacts (via region D2) with host PPIA/CYPA; the interaction stimulates RNA-binding ability of NS5A and is dependent on the peptidyl-prolyl cis-trans isomerase activity of PPIA/CYPA. Interacts with host TRIM14; this interaction induces the degradation of NS5A. As to quaternary structure, homooligomer. Interacts with non-structural protein 5A. Interacts with host VAPB. Interacts with host PRK2/PKN2. Interacts with host HNRNPA1 and SEPT6; these interactions facilitate viral replication. Part of the replication complex composed of NS2, NS3, NS4A, NS4B, NS5A and the RNA-directed RNA polymerase. It depends on Zn(2+) as a cofactor. The cofactor is Mg(2+). Specific enzymatic cleavages in vivo yield mature proteins. The structural proteins, core, E1, E2 and p7 are produced by proteolytic processing by host signal peptidases. The core protein precursor is synthesized as a 23 kDa, which is retained in the ER membrane through the hydrophobic signal peptide. Cleavage by the signal peptidase releases the 21 kDa mature core protein. The cleavage of the core protein precursor occurs between aminoacids 176 and 188 but the exact cleavage site is not known. Some degraded forms of the core protein appear as well during the course of infection. The other proteins (p7, NS2, NS3, NS4A, NS4B, NS5A and NS5B) are cleaved by the viral proteases. Autoprocessing between NS2 and NS3 is mediated by the NS2 cysteine protease catalytic domain and regulated by the NS3 N-terminal domain. Post-translationally, phosphorylated by host PKC and PKA. In terms of processing, ubiquitinated; mediated by UBE3A and leading to core protein subsequent proteasomal degradation. Highly N-glycosylated. Post-translationally, palmitoylation is required for NS2/3 autoprocessing and E2 recruitment to membranes. In terms of processing, palmitoylated. This modification may play a role in its polymerization or in protein-protein interactions. Phosphorylated on serines in a basal form termed p56. p58 is a hyperphosphorylated form of p56. p56 and p58 coexist in the cell in roughly equivalent amounts. Hyperphosphorylation is dependent on the presence of NS4A. Host CSNK1A1/CKI-alpha or RPS6KB1 kinases may be responsible for NS5A phosphorylation. Post-translationally, tyrosine phosphorylation is essential for the interaction with host SRC. In terms of processing, ubiquitinated. Ubiquitination, most probably at Lys-2350, mediated by host IFI27 and SKP2 leads to proteasomal degradation, restricting viral infection. Ubiquitination by host TRIM22 leads to interruption of viral replication. The N-terminus is phosphorylated by host PRK2/PKN2.

It is found in the host endoplasmic reticulum membrane. It localises to the host mitochondrion membrane. The protein localises to the virion. The protein resides in the host cytoplasm. Its subcellular location is the host nucleus. It is found in the host lipid droplet. It localises to the virion membrane. The protein localises to the host mitochondrion. The protein resides in the host cell membrane. Its subcellular location is the host perinuclear region. It carries out the reaction Hydrolysis of four peptide bonds in the viral precursor polyprotein, commonly with Asp or Glu in the P6 position, Cys or Thr in P1 and Ser or Ala in P1'.. The catalysed reaction is a ribonucleoside 5'-triphosphate + H2O = a ribonucleoside 5'-diphosphate + phosphate + H(+). It catalyses the reaction ATP + H2O = ADP + phosphate + H(+). The enzyme catalyses RNA(n) + a ribonucleoside 5'-triphosphate = RNA(n+1) + diphosphate. Its activity is regulated as follows. Inhibited by the antiviral drug hexamethylene amiloride. Inhibition by amantadine appears to be genotype-dependent. Also inhibited by long-alkyl-chain iminosugar derivatives. Activity is up-regulated by PRK2/PKN2-mediated phosphorylation. Functionally, packages viral RNA to form a viral nucleocapsid, and promotes virion budding. Participates in the viral particle production as a result of its interaction with the non-structural protein 5A. Binds RNA and may function as a RNA chaperone to induce the RNA structural rearrangements taking place during virus replication. Modulates viral translation initiation by interacting with viral IRES and 40S ribosomal subunit. Affects various cell signaling pathways, host immunity and lipid metabolism. Prevents the establishment of cellular antiviral state by blocking the interferon-alpha/beta (IFN-alpha/beta) and IFN-gamma signaling pathways and by blocking the formation of phosphorylated STAT1 and promoting ubiquitin-mediated proteasome-dependent degradation of STAT1. Activates STAT3 leading to cellular transformation. Regulates the activity of cellular genes, including c-myc and c-fos. May repress the promoter of p53, and sequester CREB3 and SP110 isoform 3/Sp110b in the cytoplasm. Represses cell cycle negative regulating factor CDKN1A, thereby interrupting an important check point of normal cell cycle regulation. Targets transcription factors involved in the regulation of inflammatory responses and in the immune response: suppresses TNF-induced NF-kappa-B activation, and activates AP-1. Binds to dendritic cells (DCs) via C1QR1, resulting in down-regulation of T-lymphocytes proliferation. Alters lipid metabolism by interacting with hepatocellular proteins involved in lipid accumulation and storage. Induces up-regulation of FAS promoter activity, and thereby contributes to the increased triglyceride accumulation in hepatocytes (steatosis). Forms a heterodimer with envelope glycoprotein E2, which mediates virus attachment to the host cell, virion internalization through clathrin-dependent endocytosis and fusion with host membrane. Fusion with the host cell is most likely mediated by both E1 and E2, through conformational rearrangements of the heterodimer required for fusion rather than a classical class II fusion mechanism. E1/E2 heterodimer binds host apolipoproteins such as APOB and ApoE thereby forming a lipo-viro-particle (LVP). APOE associated to the LVP allows the initial virus attachment to cell surface receptors such as the heparan sulfate proteoglycans (HSPGs), syndecan-1 (SDC1), syndecan-1 (SDC2), the low-density lipoprotein receptor (LDLR) and scavenger receptor class B type I (SCARB1). The cholesterol transfer activity of SCARB1 allows E2 exposure and binding of E2 to SCARB1 and the tetraspanin CD81. E1/E2 heterodimer binding on CD81 activates the epithelial growth factor receptor (EGFR) signaling pathway. Diffusion of the complex E1-E2-EGFR-SCARB1-CD81 to the cell lateral membrane allows further interaction with Claudin 1 (CLDN1) and occludin (OCLN) to finally trigger HCV entry. Its function is as follows. Forms a heterodimer with envelope glycoprotein E1, which mediates virus attachment to the host cell, virion internalization through clathrin-dependent endocytosis and fusion with host membrane. Fusion with the host cell is most likely mediated by both E1 and E2, through conformational rearrangements of the heterodimer required for fusion rather than a classical class II fusion mechanism. The interaction between envelope glycoprotein E2 and host apolipoprotein E/APOE allows the proper assembly, maturation and infectivity of the viral particles. This interaction is probably promoted via the up-regulation of cellular autophagy by the virus. E1/E2 heterodimer binds host apolipoproteins such as APOB and APOE thereby forming a lipo-viro-particle (LVP). APOE associated to the LVP allows the initial virus attachment to cell surface receptors such as the heparan sulfate proteoglycans (HSPGs), syndecan-1 (SDC1), syndecan-1 (SDC2), the low-density lipoprotein receptor (LDLR) and scavenger receptor class B type I (SCARB1). The cholesterol transfer activity of SCARB1 allows E2 exposure and binding of E2 to SCARB1 and the tetraspanin CD81. E1/E2 heterodimer binding on CD81 activates the epithelial growth factor receptor (EGFR) signaling pathway. Diffusion of the complex E1-E2-EGFR-SCARB1-CD81 to the cell lateral membrane allows further interaction with Claudin 1 (CLDN1) and occludin (OCLN) to finally trigger HCV entry. Inhibits host EIF2AK2/PKR activation, preventing the establishment of an antiviral state. Viral ligand for CD209/DC-SIGN and CLEC4M/DC-SIGNR, which are respectively found on dendritic cells (DCs), and on liver sinusoidal endothelial cells and macrophage-like cells of lymph node sinuses. These interactions allow the capture of circulating HCV particles by these cells and subsequent facilitated transmission to permissive cells such as hepatocytes and lymphocyte subpopulations. The interaction between E2 and host amino acid transporter complex formed by SLC3A2 and SLC7A5/LAT1 may facilitate viral entry into host cell. In terms of biological role, ion channel protein that acts as a viroporin and plays an essential role in the assembly, envelopment and secretion of viral particles. Regulates the host cell secretory pathway, which induces the intracellular retention of viral glycoproteins and favors assembly of viral particles. Creates a pore in acidic organelles and releases Ca(2+) and H(+) in the cytoplasm of infected cells, leading to a productive viral infection. High levels of cytoplasmic Ca(2+) may trigger membrane trafficking and transport of viral ER-associated proteins to viroplasms, sites of viral genome replication. This ionic imbalance induces the assembly of the inflammasome complex, which triggers the maturation of pro-IL-1beta into IL-1beta through the action of caspase-1. Targets also host mitochondria and induces mitochondrial depolarization. In addition of its role as a viroporin, acts as a lipid raft adhesion factor. Functionally, cysteine protease required for the proteolytic auto-cleavage between the non-structural proteins NS2 and NS3. The N-terminus of NS3 is required for the function of NS2 protease (active region NS2-3). Promotes the initiation of viral particle assembly by mediating the interaction between structural and non-structural proteins. Displays three enzymatic activities: serine protease with a chymotrypsin-like fold, NTPase and RNA helicase. NS3 serine protease, in association with NS4A, is responsible for the cleavages of NS3-NS4A, NS4A-NS4B, NS4B-NS5A and NS5A-NS5B. The NS3/NS4A complex prevents phosphorylation of host IRF3, thus preventing the establishment of dsRNA induced antiviral state. The NS3/NS4A complex induces host amino acid transporter component SLC3A2, thus contributing to HCV propagation. NS3 RNA helicase binds to RNA and unwinds both dsDNA and dsRNA in the 3' to 5' direction, and likely resolves RNA complicated stable secondary structures in the template strand. Binds a single ATP and catalyzes the unzipping of a single base pair of dsRNA. Inhibits host antiviral proteins TBK1 and IRF3 thereby preventing the establishment of an antiviral state. Cleaves host MAVS/CARDIF thereby preventing the establishment of an antiviral state. Cleaves host TICAM1/TRIF, thereby disrupting TLR3 signaling and preventing the establishment of an antiviral state. Its function is as follows. Peptide cofactor which forms a non-covalent complex with the N-terminal of NS3 serine protease. The NS3/NS4A complex prevents phosphorylation of host IRF3, thus preventing the establishment of dsRNA induced antiviral state. The NS3/NS4A complex induces host amino acid transporter component SLC3A2, thus contributing to HCV propagation. In terms of biological role, induces a specific membrane alteration that serves as a scaffold for the virus replication complex. This membrane alteration gives rise to the so-called ER-derived membranous web that contains the replication complex. NS4B self-interaction contributes to its function in membranous web formation. Promotes host TRIF protein degradation in a CASP8-dependent manner thereby inhibiting host TLR3-mediated interferon signaling. Disrupts the interaction between STING and TBK1 contributing to the inhibition of interferon signaling. Functionally, phosphorylated protein that is indispensable for viral replication and assembly. Both hypo- and hyperphosphorylated states are required for the viral life cycle. The hyperphosphorylated form of NS5A is an inhibitor of viral replication. Involved in RNA-binding and especially in binding to the viral genome. Zinc is essential for RNA-binding. Participates in the viral particle production as a result of its interaction with the mature viral core protein. Its interaction with host VAPB may target the viral replication complex to vesicles. Down-regulates viral IRES translation initiation. Mediates interferon resistance, presumably by interacting with and inhibiting host EIF2AK2/PKR. Prevents BIN1-induced apoptosis. Acts as a transcriptional activator of some host genes important for viral replication when localized in the nucleus. Via the interaction with host PACSIN2, modulates lipid droplet formation in order to promote virion assembly. Modulates TNFRSF21/DR6 signaling pathway for viral propagation. RNA-dependent RNA polymerase that performs primer-template recognition and RNA synthesis during viral replication. Initiates RNA transcription/replication at a flavin adenine dinucleotide (FAD), resulting in a 5'- FAD cap on viral RNAs. In this way, recognition of viral 5' RNA by host pattern recognition receptors can be bypassed, thereby evading activation of antiviral pathways. The protein is Genome polyprotein of Hepatitis C virus genotype 2k (isolate VAT96) (HCV).